We begin with the raw amino-acid sequence, 152 residues long: Transcription elongation factor Spt5 (152 aa).

A KOW domain is found at Glu-99–Leu-129.

This sequence belongs to the archaeal Spt5 family. As to quaternary structure, heterodimer composed of Spt4 and Spt5. Interacts with RNA polymerase (RNAP).

Its function is as follows. Stimulates transcription elongation. In Sulfolobus acidocaldarius (strain ATCC 33909 / DSM 639 / JCM 8929 / NBRC 15157 / NCIMB 11770), this protein is Transcription elongation factor Spt5.